Consider the following 805-residue polypeptide: Sucrose synthase 1 (805 aa).

Residues 274 to 751 (MVFNVVILSP…GLQRIYEKYT (478 aa)) form a GT-B glycosyltransferase region.

It belongs to the glycosyltransferase 1 family. Plant sucrose synthase subfamily.

The catalysed reaction is an NDP-alpha-D-glucose + D-fructose = a ribonucleoside 5'-diphosphate + sucrose + H(+). Its function is as follows. Sucrose-cleaving enzyme that provides UDP-glucose and fructose for various metabolic pathways. The protein is Sucrose synthase 1 of Tulipa gesneriana (Garden tulip).